Here is a 289-residue protein sequence, read N- to C-terminus: Rhodopsin (289 aa).

At 1–7 the chain is on the extracellular side; that stretch reads YLVNPAG. A helical membrane pass occupies residues 8 to 32; sequence YAALGAYMFLLILIGSPVNFLTLYV. Residues 33–44 lie on the Cytoplasmic side of the membrane; that stretch reads TLEHKKLRTPLN. A helical membrane pass occupies residues 45-67; it reads YILLNLAVADLFMVLGGFTTTMY. Over 68–81 the chain is Extracellular; that stretch reads TSMHGYSVLGRLGC. A disulfide bridge links Cys81 with Cys158. Residues 82 to 104 traverse the membrane as a helical segment; that stretch reads ILEGFFATLGGEIALWSLVVLAI. A 'Ionic lock' involved in activated form stabilization motif is present at residues 105-107; sequence ERW. The Cytoplasmic portion of the chain corresponds to 105-123; it reads ERWIVVCKPISNFRFTEDH. A helical transmembrane segment spans residues 124–144; sequence AIMGLAFSWVMALACAVPPLV. The Extracellular segment spans residues 145-173; that stretch reads GWSRYIPEGMQCSCGVDYYTRAEGFNNES. N-linked (GlcNAc...) asparagine glycosylation is present at Asn171. The helical transmembrane segment at 174–195 threads the bilayer; it reads FVIYMFIVHFLIPLSVIFFCYG. Residues 196–223 are Cytoplasmic-facing; sequence RLLCAVKEAAAAQQESETTQRPEKEVTR. Residues 224 to 245 form a helical membrane-spanning segment; that stretch reads MVVIMVIAFLVCCLPNASVAWW. The Extracellular segment spans residues 246 to 257; sequence IFCNQGSDFGPI. The helical transmembrane segment at 258–279 threads the bilayer; that stretch reads FMTLPSFFAKSAAIYNPMIYIC. At Lys267 the chain carries N6-(retinylidene)lysine. Residues 280–289 lie on the Cytoplasmic side of the membrane; it reads MNKQFRHCMI.

Belongs to the G-protein coupled receptor 1 family. Opsin subfamily. Post-translationally, phosphorylated on some or all of the serine and threonine residues present in the C-terminal region. Contains one covalently linked retinal chromophore.

It is found in the membrane. The protein resides in the cell projection. Its subcellular location is the cilium. It localises to the photoreceptor outer segment. Functionally, photoreceptor required for image-forming vision at low light intensity. While most salt water fish species use retinal as chromophore, most freshwater fish use 3-dehydroretinal, or a mixture of retinal and 3-dehydroretinal. Light-induced isomerization of 11-cis to all-trans retinal triggers a conformational change that activates signaling via G-proteins. Subsequent receptor phosphorylation mediates displacement of the bound G-protein alpha subunit by arrestin and terminates signaling. This chain is Rhodopsin (rho), found in Limnocottus bergianus.